A 178-amino-acid polypeptide reads, in one-letter code: Cytochrome b6-f complex iron-sulfur subunit 2 (178 aa).

The chain crosses the membrane as a helical span at residues 17–36 (LLNFFTGAIVAATASAAIYP). The region spanning 61–161 (GHPIPASQIL…VQVKDDYIWI (101 aa)) is the Rieske domain. [2Fe-2S] cluster is bound by residues Cys107, His109, Cys125, and His128. Cysteines 112 and 127 form a disulfide.

Belongs to the Rieske iron-sulfur protein family. As to quaternary structure, the 4 large subunits of the cytochrome b6-f complex are cytochrome b6, subunit IV (17 kDa polypeptide, PetD), cytochrome f and the Rieske protein, while the 4 small subunits are PetG, PetL, PetM and PetN. The complex functions as a dimer. [2Fe-2S] cluster serves as cofactor.

Its subcellular location is the cellular thylakoid membrane. It catalyses the reaction 2 oxidized [plastocyanin] + a plastoquinol + 2 H(+)(in) = 2 reduced [plastocyanin] + a plastoquinone + 4 H(+)(out). Component of the cytochrome b6-f complex, which mediates electron transfer between photosystem II (PSII) and photosystem I (PSI), cyclic electron flow around PSI, and state transitions. The polypeptide is Cytochrome b6-f complex iron-sulfur subunit 2 (Trichormus variabilis (strain ATCC 29413 / PCC 7937) (Anabaena variabilis)).